The following is a 205-amino-acid chain: Proteasome subunit beta type-3 (205 aa).

Belongs to the peptidase T1B family. In terms of assembly, the 26S proteasome consists of a 20S proteasome core and two 19S regulatory subunits. The 20S proteasome core is composed of 28 subunits that are arranged in four stacked rings, resulting in a barrel-shaped structure. The two end rings are each formed by seven alpha subunits, and the two central rings are each formed by seven beta subunits. The catalytic chamber with the active sites is on the inside of the barrel.

It localises to the cytoplasm. The protein localises to the nucleus. Non-catalytic component of the proteasome, a multicatalytic proteinase complex which is characterized by its ability to cleave peptides with Arg, Phe, Tyr, Leu, and Glu adjacent to the leaving group at neutral or slightly basic pH. The proteasome has an ATP-dependent proteolytic activity. This is Proteasome subunit beta type-3 from Drosophila melanogaster (Fruit fly).